Here is a 543-residue protein sequence, read N- to C-terminus: Chaperonin GroEL (543 aa).

ATP is bound by residues 29–32, 86–90, Gly413, 478–480, and Asp494; these read TLGP, DGTTT, and NAA.

This sequence belongs to the chaperonin (HSP60) family. Forms a cylinder of 14 subunits composed of two heptameric rings stacked back-to-back. Interacts with the co-chaperonin GroES.

The protein localises to the cytoplasm. It catalyses the reaction ATP + H2O + a folded polypeptide = ADP + phosphate + an unfolded polypeptide.. Functionally, together with its co-chaperonin GroES, plays an essential role in assisting protein folding. The GroEL-GroES system forms a nano-cage that allows encapsulation of the non-native substrate proteins and provides a physical environment optimized to promote and accelerate protein folding. The polypeptide is Chaperonin GroEL (Lactobacillus johnsonii (strain CNCM I-12250 / La1 / NCC 533)).